The following is a 383-amino-acid chain: Na(+)/H(+) antiporter NhaA (383 aa).

11 helical membrane passes run 14–34 (AGGILLVIAAAIAMTIANSPL), 47–67 (FGMSVSHWINDGLMAVFFLLI), 87–107 (IFPAIAAVGGMLAPALIYVAF), 117–137 (GWAIPAATDIAFALGIMALLG), 146–166 (VFLLALAIIDDLGVVVIIALF), 171–191 (LSSMALLVGFVMTGVLFMLNA), 205–225 (AILWFAVLKSGVHATLAGVVI), 252–272 (VAFGILPLFAFANAGISLEGV), 280–300 (MLPLGIALGLLIGKPLGIFSF), 321–341 (IFAVSVLCGIGFTMSIFISSL), and 356–376 (LGILMGSTTAAVLGYALLHFS).

The protein belongs to the NhaA Na(+)/H(+) (TC 2.A.33) antiporter family.

It is found in the cell inner membrane. The catalysed reaction is Na(+)(in) + 2 H(+)(out) = Na(+)(out) + 2 H(+)(in). The enzyme catalyses Li(+)(in) + 2 H(+)(out) = Li(+)(out) + 2 H(+)(in). Its activity is regulated as follows. Activity is regulated by pH. Active at alkaline pH. Amiloride strongly reduces affinity for Na(+), but does not change the Vmax. In terms of biological role, na(+)/H(+) antiporter that extrudes sodium in exchange for external protons. Can also transport lithium and potassium. The protein is Na(+)/H(+) antiporter NhaA of Vibrio parahaemolyticus serotype O3:K6 (strain RIMD 2210633).